A 288-amino-acid chain; its full sequence is Acetyl-coenzyme A carboxylase carboxyl transferase subunit beta (288 aa).

Positions 30 to 288 constitute a CoA carboxyltransferase N-terminal domain; that stretch reads IMTKCPKCKK…KLHQEVKKDA (259 aa). Residues Cys-34, Cys-37, Cys-53, and Cys-56 each contribute to the Zn(2+) site. The segment at 34–56 adopts a C4-type zinc-finger fold; the sequence is CPKCKKIMYTKELNENLNVCFNC.

The protein belongs to the AccD/PCCB family. In terms of assembly, acetyl-CoA carboxylase is a heterohexamer composed of biotin carboxyl carrier protein (AccB), biotin carboxylase (AccC) and two subunits each of ACCase subunit alpha (AccA) and ACCase subunit beta (AccD). Zn(2+) serves as cofactor.

It is found in the cytoplasm. It carries out the reaction N(6)-carboxybiotinyl-L-lysyl-[protein] + acetyl-CoA = N(6)-biotinyl-L-lysyl-[protein] + malonyl-CoA. Its pathway is lipid metabolism; malonyl-CoA biosynthesis; malonyl-CoA from acetyl-CoA: step 1/1. Its function is as follows. Component of the acetyl coenzyme A carboxylase (ACC) complex. Biotin carboxylase (BC) catalyzes the carboxylation of biotin on its carrier protein (BCCP) and then the CO(2) group is transferred by the transcarboxylase to acetyl-CoA to form malonyl-CoA. The sequence is that of Acetyl-coenzyme A carboxylase carboxyl transferase subunit beta from Staphylococcus haemolyticus (strain JCSC1435).